Consider the following 333-residue polypeptide: Ketol-acid reductoisomerase (NADP(+)) (333 aa).

The region spanning 1–179 (MFYDDDADLS…GGTRAGVIKT (179 aa)) is the KARI N-terminal Rossmann domain. Residues 22 to 25 (YGSQ), Lys45, Ser48, Ser50, and 80 to 83 (DTAQ) each bind NADP(+). His105 is a catalytic residue. Gly131 is a binding site for NADP(+). The region spanning 180–325 (TFKDETETDL…KKLRDLMSWV (146 aa)) is the KARI C-terminal knotted domain. Residues Asp188, Glu192, Glu224, and Glu228 each contribute to the Mg(2+) site. Ser249 is a binding site for substrate.

Belongs to the ketol-acid reductoisomerase family. It depends on Mg(2+) as a cofactor.

The enzyme catalyses (2R)-2,3-dihydroxy-3-methylbutanoate + NADP(+) = (2S)-2-acetolactate + NADPH + H(+). It carries out the reaction (2R,3R)-2,3-dihydroxy-3-methylpentanoate + NADP(+) = (S)-2-ethyl-2-hydroxy-3-oxobutanoate + NADPH + H(+). The protein operates within amino-acid biosynthesis; L-isoleucine biosynthesis; L-isoleucine from 2-oxobutanoate: step 2/4. It functions in the pathway amino-acid biosynthesis; L-valine biosynthesis; L-valine from pyruvate: step 2/4. Its function is as follows. Involved in the biosynthesis of branched-chain amino acids (BCAA). Catalyzes an alkyl-migration followed by a ketol-acid reduction of (S)-2-acetolactate (S2AL) to yield (R)-2,3-dihydroxy-isovalerate. In the isomerase reaction, S2AL is rearranged via a Mg-dependent methyl migration to produce 3-hydroxy-3-methyl-2-ketobutyrate (HMKB). In the reductase reaction, this 2-ketoacid undergoes a metal-dependent reduction by NADPH to yield (R)-2,3-dihydroxy-isovalerate. This chain is Ketol-acid reductoisomerase (NADP(+)), found in Mycobacterium ulcerans (strain Agy99).